Consider the following 235-residue polypeptide: Large ribosomal subunit protein uL1 (235 aa).

Belongs to the universal ribosomal protein uL1 family. Part of the 50S ribosomal subunit.

Binds directly to 23S rRNA. The L1 stalk is quite mobile in the ribosome, and is involved in E site tRNA release. Functionally, protein L1 is also a translational repressor protein, it controls the translation of the L11 operon by binding to its mRNA. This chain is Large ribosomal subunit protein uL1, found in Fusobacterium nucleatum subsp. nucleatum (strain ATCC 25586 / DSM 15643 / BCRC 10681 / CIP 101130 / JCM 8532 / KCTC 2640 / LMG 13131 / VPI 4355).